We begin with the raw amino-acid sequence, 237 residues long: Pyridoxine 5'-phosphate synthase (237 aa).

Residues N7 and R18 each contribute to the 3-amino-2-oxopropyl phosphate site. Catalysis depends on H43, which acts as the Proton acceptor. 1-deoxy-D-xylulose 5-phosphate contacts are provided by R45 and H50. Catalysis depends on E70, which acts as the Proton acceptor. 1-deoxy-D-xylulose 5-phosphate is bound at residue T100. H190 acts as the Proton donor in catalysis. 3-amino-2-oxopropyl phosphate contacts are provided by residues D191 and 213–214 (GH).

It belongs to the PNP synthase family. As to quaternary structure, homooctamer; tetramer of dimers.

The protein localises to the cytoplasm. It catalyses the reaction 3-amino-2-oxopropyl phosphate + 1-deoxy-D-xylulose 5-phosphate = pyridoxine 5'-phosphate + phosphate + 2 H2O + H(+). Its pathway is cofactor biosynthesis; pyridoxine 5'-phosphate biosynthesis; pyridoxine 5'-phosphate from D-erythrose 4-phosphate: step 5/5. In terms of biological role, catalyzes the complicated ring closure reaction between the two acyclic compounds 1-deoxy-D-xylulose-5-phosphate (DXP) and 3-amino-2-oxopropyl phosphate (1-amino-acetone-3-phosphate or AAP) to form pyridoxine 5'-phosphate (PNP) and inorganic phosphate. This is Pyridoxine 5'-phosphate synthase from Bacteroides fragilis (strain ATCC 25285 / DSM 2151 / CCUG 4856 / JCM 11019 / LMG 10263 / NCTC 9343 / Onslow / VPI 2553 / EN-2).